The following is a 1041-amino-acid chain: RAS protein activator like-3 (1041 aa).

A disordered region spans residues 1–59 (MKPECGQTMFRTFWSRSRDSSAMDPPLQSEEDSQTQPSLPSPLTSYRWHTGGSGEKAAG). The segment covering 34–44 (QTQPSLPSPLT) has biased composition (polar residues). Ser-41, Ser-74, Ser-187, Ser-189, Ser-190, Ser-193, Ser-239, Ser-252, Ser-256, and Ser-259 each carry phosphoserine. A coiled-coil region spans residues 218 to 243 (SNQVHNVRKLLKRLKEKKRAKSELGA). The 102-residue stretch at 220 to 321 (QVHNVRKLLK…WIEDLRRQFQ (102 aa)) folds into the PH domain. The tract at residues 234 to 256 (KKRAKSELGAYTPRDGPPSALGS) is disordered. Phosphothreonine is present on Thr-262. The region spanning 312–430 (WIEDLRRQFQ…APAAGLERWF (119 aa)) is the C2 domain. The 209-residue stretch at 500-708 (GRAQALVTDL…PAMQHFLDQV (209 aa)) folds into the Ras-GAP domain. The disordered stretch occupies residues 790 to 910 (GEKPGFLAPR…PGDRYQTTGT (121 aa)). 2 positions are modified to phosphoserine: Ser-813 and Ser-816. Basic residues predominate over residues 850-866 (RPTHRRPSAGSKPRPKG). The stretch at 931 to 1013 (QKALSLLVES…LRDSLQSLQL (83 aa)) forms a coiled coil. A disordered region spans residues 1016 to 1041 (KTPGSRSQPLPLKAPCVNGADLSMGT).

As to expression, predominantly expressed in hematopoietic tissues.

The protein localises to the cytoplasm. It localises to the cell cortex. Functionally, functions as a Ras GTPase-activating protein. Plays an important role in the expansion and functions of natural killer T (NKT) cells in the liver by negatively regulating RAS activity and the down-stream ERK signaling pathway. The sequence is that of RAS protein activator like-3 (Rasal3) from Mus musculus (Mouse).